Consider the following 137-residue polypeptide: uncharacterized protein (137 aa).

This sequence to E.coli YfdK.

This is an uncharacterized protein from Escherichia coli (strain K12).